A 513-amino-acid polypeptide reads, in one-letter code: 2-isopropylmalate synthase (513 aa).

One can recognise a Pyruvate carboxyltransferase domain in the interval 4 to 266; sequence IEFFDTSLRD…KSPLVLAETM (263 aa). Mn(2+) is bound by residues D13, H201, H203, and N237. The tract at residues 390 to 513 is regulatory domain; that stretch reads ILNNVQIDGH…VEQISAHDGI (124 aa).

This sequence belongs to the alpha-IPM synthase/homocitrate synthase family. LeuA type 1 subfamily. In terms of assembly, homodimer. Requires Mn(2+) as cofactor.

The protein localises to the cytoplasm. It catalyses the reaction 3-methyl-2-oxobutanoate + acetyl-CoA + H2O = (2S)-2-isopropylmalate + CoA + H(+). It participates in amino-acid biosynthesis; L-leucine biosynthesis; L-leucine from 3-methyl-2-oxobutanoate: step 1/4. Catalyzes the condensation of the acetyl group of acetyl-CoA with 3-methyl-2-oxobutanoate (2-ketoisovalerate) to form 3-carboxy-3-hydroxy-4-methylpentanoate (2-isopropylmalate). The sequence is that of 2-isopropylmalate synthase from Lactococcus lactis subsp. cremoris (strain SK11).